The chain runs to 418 residues: Replication factor C large subunit (418 aa).

An ATP-binding site is contributed by 47 to 54 (GSQGTGKT).

This sequence belongs to the activator 1 small subunits family. RfcL subfamily. Heteromultimer composed of small subunits (RfcS) and large subunits (RfcL).

Its function is as follows. Part of the RFC clamp loader complex which loads the PCNA sliding clamp onto DNA. This Thermoplasma acidophilum (strain ATCC 25905 / DSM 1728 / JCM 9062 / NBRC 15155 / AMRC-C165) protein is Replication factor C large subunit.